Consider the following 487-residue polypeptide: Homoserine O-acetyltransferase (487 aa).

The 308-residue stretch at Asn-45–Glu-352 folds into the AB hydrolase-1 domain. The Nucleophile role is filled by Ser-150. Residue Arg-219 participates in substrate binding. Active-site residues include Asp-313 and His-346. Asp-347 serves as a coordination point for substrate. 2 consecutive CBS domains span residues Met-373 to Leu-430 and Met-434 to Gln-487.

The protein belongs to the AB hydrolase superfamily. MetX family. Homodimer.

It is found in the cytoplasm. The catalysed reaction is L-homoserine + acetyl-CoA = O-acetyl-L-homoserine + CoA. It functions in the pathway amino-acid biosynthesis; L-methionine biosynthesis via de novo pathway; O-acetyl-L-homoserine from L-homoserine: step 1/1. Its function is as follows. Transfers an acetyl group from acetyl-CoA to L-homoserine, forming acetyl-L-homoserine. In Methanocorpusculum labreanum (strain ATCC 43576 / DSM 4855 / Z), this protein is Homoserine O-acetyltransferase.